The sequence spans 487 residues: Protein nucleotidyltransferase YdiU (487 aa).

Residues G85, G87, R88, K108, D120, G121, R171, and R178 each coordinate ATP. The Proton acceptor role is filled by D247. Mg(2+) is bound by residues N248 and D257. Position 257 (D257) interacts with ATP.

Belongs to the SELO family. The cofactor is Mg(2+). Mn(2+) serves as cofactor.

It carries out the reaction L-seryl-[protein] + ATP = 3-O-(5'-adenylyl)-L-seryl-[protein] + diphosphate. It catalyses the reaction L-threonyl-[protein] + ATP = 3-O-(5'-adenylyl)-L-threonyl-[protein] + diphosphate. The catalysed reaction is L-tyrosyl-[protein] + ATP = O-(5'-adenylyl)-L-tyrosyl-[protein] + diphosphate. The enzyme catalyses L-histidyl-[protein] + UTP = N(tele)-(5'-uridylyl)-L-histidyl-[protein] + diphosphate. It carries out the reaction L-seryl-[protein] + UTP = O-(5'-uridylyl)-L-seryl-[protein] + diphosphate. It catalyses the reaction L-tyrosyl-[protein] + UTP = O-(5'-uridylyl)-L-tyrosyl-[protein] + diphosphate. In terms of biological role, nucleotidyltransferase involved in the post-translational modification of proteins. It can catalyze the addition of adenosine monophosphate (AMP) or uridine monophosphate (UMP) to a protein, resulting in modifications known as AMPylation and UMPylation. The sequence is that of Protein nucleotidyltransferase YdiU from Agrobacterium fabrum (strain C58 / ATCC 33970) (Agrobacterium tumefaciens (strain C58)).